We begin with the raw amino-acid sequence, 253 residues long: Sulfate transporter CysZ (253 aa).

Helical transmembrane passes span 31-51 (FVILPLLVNILLMGGAFWWLF), 72-92 (LSYILWPLAVISVLLIFGYFF), 151-171 (IVLLILYFIPGVGQTVAPVLW), and 222-242 (IPVLNLFIMPVAVCGATAMWV).

Belongs to the CysZ family.

It localises to the cell inner membrane. In terms of biological role, high affinity, high specificity proton-dependent sulfate transporter, which mediates sulfate uptake. Provides the sulfur source for the cysteine synthesis pathway. This chain is Sulfate transporter CysZ, found in Escherichia fergusonii (strain ATCC 35469 / DSM 13698 / CCUG 18766 / IAM 14443 / JCM 21226 / LMG 7866 / NBRC 102419 / NCTC 12128 / CDC 0568-73).